The following is a 489-amino-acid chain: Probable capsid protein (489 aa).

A compositionally biased stretch (basic and acidic residues) spans 87-101 (RMERGESSETKREQQ). Residues 87 to 111 (RMERGESSETKREQQDLGATRKRKI) are disordered. A Nuclear localization signal motif is present at residues 107-110 (RKRK). The CCHC-type zinc finger occupies 409–426 (CRCWICTEEGHYANECPN). Residues 466 to 489 (ETTSEEESTTDSDSSSSDDEQLSF) form a disordered region.

The protein belongs to the caulimoviridae capsid protein family. In terms of assembly, interacts (via nuclear localization signal) with host importin alpha.

Its subcellular location is the virion. The protein localises to the host nucleus. Self assembles to form an icosahedral capsid, about 50 nm in diameter, nm, composed of 420 subunits of the viral capsid protein. The capsid encapsulates the genomic dsDNA. Following virus entry into host cell, provides nuclear import of the viral genome. Virus particles do not enter the nucleus, but dock at the nuclear membrane through the interaction with host importins. This Scrophularia californica (California bee plant) protein is Probable capsid protein.